We begin with the raw amino-acid sequence, 665 residues long: UvrABC system protein B (665 aa).

The Helicase ATP-binding domain occupies 25–178 (ASLQAEHRFQ…RQLLRDLTTI (154 aa)). Residue 38 to 45 (GATGTGKT) coordinates ATP. Positions 91–114 (YYDYYQPEAYIPVTDTYIEKTAAI) match the Beta-hairpin motif. Residues 429–595 (QVDDLLGEVR…PIVKKASNAI (167 aa)) form the Helicase C-terminal domain. The UVR domain maps to 626–661 (PELITQLEAQMKEAAKKLEFEEAAKYRDRIKQLRDK).

Belongs to the UvrB family. Forms a heterotetramer with UvrA during the search for lesions. Interacts with UvrC in an incision complex.

It is found in the cytoplasm. In terms of biological role, the UvrABC repair system catalyzes the recognition and processing of DNA lesions. A damage recognition complex composed of 2 UvrA and 2 UvrB subunits scans DNA for abnormalities. Upon binding of the UvrA(2)B(2) complex to a putative damaged site, the DNA wraps around one UvrB monomer. DNA wrap is dependent on ATP binding by UvrB and probably causes local melting of the DNA helix, facilitating insertion of UvrB beta-hairpin between the DNA strands. Then UvrB probes one DNA strand for the presence of a lesion. If a lesion is found the UvrA subunits dissociate and the UvrB-DNA preincision complex is formed. This complex is subsequently bound by UvrC and the second UvrB is released. If no lesion is found, the DNA wraps around the other UvrB subunit that will check the other stand for damage. In Cyanothece sp. (strain PCC 7425 / ATCC 29141), this protein is UvrABC system protein B.